The primary structure comprises 410 residues: Serine/threonine transporter SstT (410 aa).

9 helical membrane passes run 11 to 31 (VSLV…AVTV), 45 to 65 (FVGA…ISAI), 79 to 99 (ILIL…VASF), 138 to 158 (ALLN…GIAL), 179 to 199 (IVTW…FDAI), 214 to 234 (LAVL…LIVF), 285 to 305 (ISIP…ISVL), 327 to 347 (VLSA…LLLI), and 353 to 373 (LFGI…IIGV).

This sequence belongs to the dicarboxylate/amino acid:cation symporter (DAACS) (TC 2.A.23) family.

Its subcellular location is the cell membrane. It carries out the reaction L-serine(in) + Na(+)(in) = L-serine(out) + Na(+)(out). It catalyses the reaction L-threonine(in) + Na(+)(in) = L-threonine(out) + Na(+)(out). In terms of biological role, involved in the import of serine and threonine into the cell, with the concomitant import of sodium (symport system). The polypeptide is Serine/threonine transporter SstT (Geobacillus thermodenitrificans (strain NG80-2)).